The primary structure comprises 443 residues: ATP-dependent protease ATPase subunit HslU (443 aa).

ATP is bound by residues Ile-18, 60–65 (GVGKTE), Asp-256, Glu-321, and Arg-393.

Belongs to the ClpX chaperone family. HslU subfamily. A double ring-shaped homohexamer of HslV is capped on each side by a ring-shaped HslU homohexamer. The assembly of the HslU/HslV complex is dependent on binding of ATP.

The protein resides in the cytoplasm. In terms of biological role, ATPase subunit of a proteasome-like degradation complex; this subunit has chaperone activity. The binding of ATP and its subsequent hydrolysis by HslU are essential for unfolding of protein substrates subsequently hydrolyzed by HslV. HslU recognizes the N-terminal part of its protein substrates and unfolds these before they are guided to HslV for hydrolysis. The protein is ATP-dependent protease ATPase subunit HslU of Pectobacterium atrosepticum (strain SCRI 1043 / ATCC BAA-672) (Erwinia carotovora subsp. atroseptica).